A 465-amino-acid polypeptide reads, in one-letter code: Phenylalanine--tRNA ligase alpha subunit (465 aa).

Residues Thr-311 and Phe-389 each contribute to the L-phenylalanine site. Residue Glu-391 coordinates Mg(2+).

This sequence belongs to the class-II aminoacyl-tRNA synthetase family. Phe-tRNA synthetase alpha subunit type 2 subfamily. In terms of assembly, tetramer of two alpha and two beta subunits. Mg(2+) is required as a cofactor.

The protein localises to the cytoplasm. It catalyses the reaction tRNA(Phe) + L-phenylalanine + ATP = L-phenylalanyl-tRNA(Phe) + AMP + diphosphate + H(+). In Metallosphaera sedula (strain ATCC 51363 / DSM 5348 / JCM 9185 / NBRC 15509 / TH2), this protein is Phenylalanine--tRNA ligase alpha subunit.